Here is a 261-residue protein sequence, read N- to C-terminus: MMIPAIDLIGGEVVRLYQGDYAQKTNYQYTVQDRQQAYAESGATVMHFVDLDGAKDSTKRQLKTLKTVVNHPSMIIQVGGGVRCEDDVKQLLALGADRVVIGSLAIKQPELVTQWVKTYGCEKIVLALDIKIDAQGNKTLPTHGWIEDSGVNLEDLLAQYQDAGIKHVLCTDISKDGTLTGTNVDLYSEVCAKYPDIDWQASGGIGSLADIKALIPTGVSGVILGRSLLEGKFTLEEAIACWPKTSANNAESNTSSNTGDK.

Asp-7 acts as the Proton acceptor in catalysis. Asp-129 functions as the Proton donor in the catalytic mechanism.

Belongs to the HisA/HisF family.

Its subcellular location is the cytoplasm. It catalyses the reaction 1-(5-phospho-beta-D-ribosyl)-5-[(5-phospho-beta-D-ribosylamino)methylideneamino]imidazole-4-carboxamide = 5-[(5-phospho-1-deoxy-D-ribulos-1-ylimino)methylamino]-1-(5-phospho-beta-D-ribosyl)imidazole-4-carboxamide. It functions in the pathway amino-acid biosynthesis; L-histidine biosynthesis; L-histidine from 5-phospho-alpha-D-ribose 1-diphosphate: step 4/9. This chain is 1-(5-phosphoribosyl)-5-[(5-phosphoribosylamino)methylideneamino] imidazole-4-carboxamide isomerase, found in Colwellia psychrerythraea (strain 34H / ATCC BAA-681) (Vibrio psychroerythus).